We begin with the raw amino-acid sequence, 579 residues long: DBIRD complex subunit ZNF326 (579 aa).

The tract at residues 1-124 is mediates transcriptional activation; sequence MDFEDDYTHS…YRNSLDSFGG (124 aa). Phosphoserine is present on residues S48, S56, S63, S69, S81, S82, S91, S106, S114, S118, S121, and S137. K140 is covalently cross-linked (Glycyl lysine isopeptide (Lys-Gly) (interchain with G-Cter in SUMO2)). Residues 154-194 are disordered; sequence YSSYSSFSSPHMKPAPVGSRGRGTPAYPESTFGSRNYDAFG. Position 173 is an omega-N-methylarginine (R173). Residue S212 is modified to Phosphoserine. An Omega-N-methylarginine modification is found at R235. Residues 238 to 260 carry the Bipartite nuclear localization signal motif; the sequence is KRKMIQPFNKPGGTFIKKPKLAK. A Glycyl lysine isopeptide (Lys-Gly) (interchain with G-Cter in SUMO2) cross-link involves residue K240. The residue at position 247 (K247) is an N6-acetyllysine; alternate. Residue K247 forms a Glycyl lysine isopeptide (Lys-Gly) (interchain with G-Cter in SUMO2); alternate linkage. A disordered region spans residues 248–302; the sequence is PGGTFIKKPKLAKPVEKMSLSKSPTKTDPKNEEEEKRRIEARREKQRRRREKNSE. T251 carries the phosphothreonine modification. Residues K254 and K264 each participate in a glycyl lysine isopeptide (Lys-Gly) (interchain with G-Cter in SUMO2) cross-link. Position 270 is a phosphoserine (S270). A compositionally biased stretch (basic and acidic residues) spans 272-290; sequence TKTDPKNEEEEKRRIEARR. Residues 314–336 form a C2H2 AKAP95-type 1 zinc finger; it reads CSFCKFRTFEEKDIELHLESASH. K401 is covalently cross-linked (Glycyl lysine isopeptide (Lys-Gly) (interchain with G-Cter in SUMO2)). Residues 407-430 form a C2H2 AKAP95-type 2 zinc finger; sequence CSACSVYIPALHSSVQQHLKSPDH. Glycyl lysine isopeptide (Lys-Gly) (interchain with G-Cter in SUMO2) cross-links involve residues K459 and K467. The tract at residues 470–579 is disordered; it reads NPFEIQDHSQ…GFSVDQAEEN (110 aa). Composition is skewed to acidic residues over residues 483 to 520, 529 to 541, and 549 to 565; these read IEGD…EEVG, GDTE…EGEG, and GEGE…EEAK.

This sequence belongs to the AKAP95 family. In terms of assembly, component of the DBIRD complex. Interacts with CCAR2; the interaction is direct.

It is found in the nucleus matrix. Functionally, core component of the DBIRD complex, a multiprotein complex that acts at the interface between core mRNP particles and RNA polymerase II (RNAPII) and integrates transcript elongation with the regulation of alternative splicing: the DBIRD complex affects local transcript elongation rates and alternative splicing of a large set of exons embedded in (A + T)-rich DNA regions. May play a role in neuronal differentiation and is able to bind DNA and activate expression in vitro. This is DBIRD complex subunit ZNF326 (ZNF326) from Bos taurus (Bovine).